Consider the following 309-residue polypeptide: Porphobilinogen deaminase (309 aa).

An S-(dipyrrolylmethanemethyl)cysteine modification is found at C244.

This sequence belongs to the HMBS family. In terms of assembly, monomer. The cofactor is dipyrromethane.

The enzyme catalyses 4 porphobilinogen + H2O = hydroxymethylbilane + 4 NH4(+). Its pathway is porphyrin-containing compound metabolism; protoporphyrin-IX biosynthesis; coproporphyrinogen-III from 5-aminolevulinate: step 2/4. Tetrapolymerization of the monopyrrole PBG into the hydroxymethylbilane pre-uroporphyrinogen in several discrete steps. In Listeria innocua serovar 6a (strain ATCC BAA-680 / CLIP 11262), this protein is Porphobilinogen deaminase.